Consider the following 369-residue polypeptide: UDP-N-acetylglucosamine--N-acetylmuramyl-(pentapeptide) pyrophosphoryl-undecaprenol N-acetylglucosamine transferase (369 aa).

UDP-N-acetyl-alpha-D-glucosamine is bound by residues T10 to G12, N124, R166, S196, and Q300.

The protein belongs to the glycosyltransferase 28 family. MurG subfamily.

Its subcellular location is the cell membrane. It catalyses the reaction di-trans,octa-cis-undecaprenyl diphospho-N-acetyl-alpha-D-muramoyl-L-alanyl-D-glutamyl-meso-2,6-diaminopimeloyl-D-alanyl-D-alanine + UDP-N-acetyl-alpha-D-glucosamine = di-trans,octa-cis-undecaprenyl diphospho-[N-acetyl-alpha-D-glucosaminyl-(1-&gt;4)]-N-acetyl-alpha-D-muramoyl-L-alanyl-D-glutamyl-meso-2,6-diaminopimeloyl-D-alanyl-D-alanine + UDP + H(+). Its pathway is cell wall biogenesis; peptidoglycan biosynthesis. Functionally, cell wall formation. Catalyzes the transfer of a GlcNAc subunit on undecaprenyl-pyrophosphoryl-MurNAc-pentapeptide (lipid intermediate I) to form undecaprenyl-pyrophosphoryl-MurNAc-(pentapeptide)GlcNAc (lipid intermediate II). This Desulfitobacterium hafniense (strain DSM 10664 / DCB-2) protein is UDP-N-acetylglucosamine--N-acetylmuramyl-(pentapeptide) pyrophosphoryl-undecaprenol N-acetylglucosamine transferase.